A 583-amino-acid polypeptide reads, in one-letter code: Aspartate--tRNA ligase (583 aa).

E174 contributes to the L-aspartate binding site. The tract at residues 198–201 (QITK) is aspartate. R220 lines the L-aspartate pocket. ATP contacts are provided by residues 220–222 (RDE) and Q229. Residue H443 participates in L-aspartate binding. An ATP-binding site is contributed by E477. R484 lines the L-aspartate pocket. Residue 529–532 (GLDR) coordinates ATP.

It belongs to the class-II aminoacyl-tRNA synthetase family. Type 1 subfamily. In terms of assembly, homodimer.

It is found in the cytoplasm. The catalysed reaction is tRNA(Asp) + L-aspartate + ATP = L-aspartyl-tRNA(Asp) + AMP + diphosphate. Catalyzes the attachment of L-aspartate to tRNA(Asp) in a two-step reaction: L-aspartate is first activated by ATP to form Asp-AMP and then transferred to the acceptor end of tRNA(Asp). The sequence is that of Aspartate--tRNA ligase from Streptococcus thermophilus (strain CNRZ 1066).